Consider the following 217-residue polypeptide: Large ribosomal subunit protein uL3 (217 aa).

Belongs to the universal ribosomal protein uL3 family. In terms of assembly, part of the 50S ribosomal subunit. Forms a cluster with proteins L14 and L19.

In terms of biological role, one of the primary rRNA binding proteins, it binds directly near the 3'-end of the 23S rRNA, where it nucleates assembly of the 50S subunit. In Mycobacterium sp. (strain KMS), this protein is Large ribosomal subunit protein uL3.